The following is a 328-amino-acid chain: Malate dehydrogenase (328 aa).

11-17 (GAAGQIG) is a binding site for NAD(+). Positions 94 and 100 each coordinate substrate. NAD(+)-binding positions include Asn107, Gln114, and 131–133 (VGN). Asn133 and Arg164 together coordinate substrate. The Proton acceptor role is filled by His189.

This sequence belongs to the LDH/MDH superfamily. MDH type 2 family.

It catalyses the reaction (S)-malate + NAD(+) = oxaloacetate + NADH + H(+). In terms of biological role, catalyzes the reversible oxidation of malate to oxaloacetate. The polypeptide is Malate dehydrogenase (Xanthomonas campestris pv. campestris (strain 8004)).